A 138-amino-acid chain; its full sequence is Small ribosomal subunit protein uS11c (138 aa).

The tract at residues 1–22 (MAKPILRIGSRKNTRSGSRKNV) is disordered. Residues 9–22 (GSRKNTRSGSRKNV) are compositionally biased toward basic residues.

It belongs to the universal ribosomal protein uS11 family. In terms of assembly, part of the 30S ribosomal subunit.

It is found in the plastid. It localises to the chloroplast. The sequence is that of Small ribosomal subunit protein uS11c from Arabis hirsuta (Hairy rock-cress).